The primary structure comprises 1423 residues: Histone-lysine N-methyltransferase ATXR7 (1423 aa).

One can recognise a GYF domain in the interval 263–312 (HACWFLVDGEGRNHGPHSILELFSWQQHGYVSDAALIRDGENKLRPITLA). 3 disordered regions span residues 923–960 (CKDH…EGTK), 1057–1097 (CSIS…SSTD), and 1115–1158 (LPCH…GRPK). Basic residues predominate over residues 936–949 (QKVKKAHTSKLKRK). A compositionally biased stretch (basic and acidic residues) spans 950-959 (NLSDARDEGT). The segment covering 1057–1071 (CSISQKGRKSSQSSI) has biased composition (polar residues). Basic and acidic residues-rich tracts occupy residues 1115–1124 (LPCHTSDKLQ) and 1140–1157 (HTTE…DGRP). Residues 1266–1383 (KHLRFQQSKI…AGEEISYNYK (118 aa)) enclose the SET domain. Tyrosine 1382 lines the S-adenosyl-L-methionine pocket.

It belongs to the class V-like SAM-binding methyltransferase superfamily. Histone-lysine methyltransferase family. TRX/MLL subfamily. In terms of tissue distribution, expressed in the shoot and root apices, vascular tissues and mesophyll cells of rosette leaves.

Its subcellular location is the nucleus. The catalysed reaction is L-lysyl(4)-[histone H3] + 3 S-adenosyl-L-methionine = N(6),N(6),N(6)-trimethyl-L-lysyl(4)-[histone H3] + 3 S-adenosyl-L-homocysteine + 3 H(+). The enzyme catalyses L-lysyl(36)-[histone H3] + 2 S-adenosyl-L-methionine = N(6),N(6)-dimethyl-L-lysyl(36)-[histone H3] + 2 S-adenosyl-L-homocysteine + 2 H(+). Functionally, histone methyltransferase involved in regulation of flowering time. Required for the expression of the flowering repressors FLC and MADS-box genes of the MAF family. Required for histone H3 dimethylation on 'Lys-36' H3K36me2 at the FLC locus. Required for histone H3 trimethylation on 'Lys-4' (H3K4me3) at the FLC locus. Prevents trimethylation on 'Lys-27' (H3K27me3) at the same locus. Involved in the control of seed dormancy and germination. The sequence is that of Histone-lysine N-methyltransferase ATXR7 from Arabidopsis thaliana (Mouse-ear cress).